The sequence spans 242 residues: Glucosamine-6-phosphate deaminase (242 aa).

Asp-67 functions as the Proton acceptor; for enolization step in the catalytic mechanism. Asn-136 serves as the catalytic For ring-opening step. His-138 serves as the catalytic Proton acceptor; for ring-opening step. Glu-143 (for ring-opening step) is an active-site residue.

It belongs to the glucosamine/galactosamine-6-phosphate isomerase family. NagB subfamily.

The enzyme catalyses alpha-D-glucosamine 6-phosphate + H2O = beta-D-fructose 6-phosphate + NH4(+). The protein operates within amino-sugar metabolism; N-acetylneuraminate degradation; D-fructose 6-phosphate from N-acetylneuraminate: step 5/5. Catalyzes the reversible isomerization-deamination of glucosamine 6-phosphate (GlcN6P) to form fructose 6-phosphate (Fru6P) and ammonium ion. In Clostridium perfringens (strain SM101 / Type A), this protein is Glucosamine-6-phosphate deaminase.